We begin with the raw amino-acid sequence, 191 residues long: Bcl-2-like protein 10 (191 aa).

The BH1 signature appears at 79-98; sequence LSKDQDFSWSQLVMLLAFAG. Residue lysine 112 forms a Glycyl lysine isopeptide (Lys-Gly) (interchain with G-Cter in ubiquitin) linkage. The short motif at 144–155 is the BH2 element; that stretch reads RLEALGGWDGFC. Residues 166-183 traverse the membrane as a helical segment; sequence FWRRLLIQAFLSGFFATA.

The protein belongs to the Bcl-2 family. In terms of assembly, interacts with BAX. Interacts with BCL2 and BCL2L1/BCLX. Interacts with APAF1. Interacts with ITPR1, ITPR2 and ITPR3; the interaction with ITPR1 is increased in the presence of AHCLY1. Interacts with AHCYL1. Interacts with HIP1R (via ENTH and I/LWEQ domains). Interacts with CASP9. Interacts with BCL2L11/BIM. Interacts with BIK. Interacts with UBQLN4. Interacts with NME2/NM23-H2. Interacts with PMAIP1/NOXA. Interacts with TPX2. Interacts with UBQLN1; in the cytoplasm. Interacts (via BH1 domain) with BECN1. The cofactor is Ca(2+). In terms of processing, monoubiquitinated by UBQLN1; results in stabilization of BCL2L10 protein abundance and in relocalization from mitochondria to cytoplasm. In terms of tissue distribution, expressed in multiple embryonic tissues. Restricted to the ovary and testis in adult mice.

It localises to the mitochondrion. The protein localises to the nucleus membrane. Its subcellular location is the endoplasmic reticulum. It is found in the cytoplasm. The protein resides in the cytoskeleton. It localises to the spindle. In terms of biological role, promotes cell survival by suppressing apoptosis induced by BAX but not BAK. Increases binding of AHCYL1/IRBIT to ITPR1. Reduces ITPR1-mediated calcium release from the endoplasmic reticulum cooperatively with AHCYL1/IRBIT under normal cellular conditions. Under apoptotic stress conditions, dissociates from ITPR1 and is displaced from mitochondria-associated endoplasmic reticulum membranes, leading to increased Ca(2+) transfer to mitochondria which promotes apoptosis. Required for the correct formation of the microtubule organizing center during oocyte cell division, potentially via regulation of protein abundance and localization of other microtubule organizing center components such as AURKA and TPX2. In Mus musculus (Mouse), this protein is Bcl-2-like protein 10.